A 236-amino-acid chain; its full sequence is Ascorbate-specific transmembrane electron transporter 1 (236 aa).

At 1-11 (MGLGLGVRAAP) the chain is on the cytoplasmic side. The chain crosses the membrane as a helical span at residues 12–32 (FTYAAHALAVAAAAMVLVWSI). One can recognise a Cytochrome b561 domain in the interval 15–219 (AAHALAVAAA…FGASVVVAAI (205 aa)). Residues 33–50 (QFRGGLAIESTNKNLIFN) lie on the Extracellular side of the membrane. A helical membrane pass occupies residues 51–71 (VHPVLMLIGYVIIGGEAIMVY). Histidine 52 contacts heme b. Residue 67-75 (AIMVYRVLP) coordinates L-ascorbate. Residues 72 to 84 (RVLPTSNHDTTKL) are Cytoplasmic-facing. The helical transmembrane segment at 85–105 (IHLILHGIALVLGAVGIYFAF) threads the bilayer. 2 residues coordinate heme b: histidine 86 and histidine 120. Over 106–122 (KNHNESGIANLYSLHSW) the chain is Extracellular. 116 to 125 (LYSLHSWIGI) is a monodehydro-L-ascorbate radical binding site. The chain crosses the membrane as a helical span at residues 123–143 (IGIGTITLYGIQWIIGFVTFF). Topologically, residues 144–153 (FPGAAPNVKK) are cytoplasmic. A helical membrane pass occupies residues 154 to 174 (GVLPWHVLFGLFVYILALANA). Histidine 159 contacts heme b. Residues 175-201 (ELGFLEKLTFLESSGLDKYGTEAFLVN) are Extracellular-facing. A helical transmembrane segment spans residues 202 to 222 (FTALVVVLFGASVVVAAIAPV). Residues 223–236 (RLEEPQGYDPIPEN) lie on the Cytoplasmic side of the membrane.

It depends on heme b as a cofactor.

It localises to the membrane. Inhibited by diethylpyrocarbonate. Its function is as follows. Two-heme-containing cytochrome. Catalyzes ascorbate-dependent trans-membrane electron transfer by utilizing a concerted H(+)/e(-) transfer mechanism. The chain is Ascorbate-specific transmembrane electron transporter 1 (ZCYB) from Zea mays (Maize).